A 181-amino-acid chain; its full sequence is Large ribosomal subunit protein uL5c (181 aa).

It belongs to the universal ribosomal protein uL5 family. Part of the 50S ribosomal subunit; contacts the 5S rRNA.

It localises to the plastid. The protein resides in the chloroplast. Binds 5S rRNA, forms part of the central protuberance of the 50S subunit. This is Large ribosomal subunit protein uL5c (rpl5) from Porphyra purpurea (Red seaweed).